A 307-amino-acid polypeptide reads, in one-letter code: Ethylmalonyl-CoA decarboxylase (307 aa).

A2 is modified (N-acetylalanine). K217 carries the post-translational modification N6-acetyllysine; alternate. The residue at position 217 (K217) is an N6-succinyllysine; alternate. At K301 the chain carries N6-succinyllysine.

It belongs to the enoyl-CoA hydratase/isomerase family.

It is found in the cytoplasm. The protein localises to the cytosol. It catalyses the reaction (2S)-ethylmalonyl-CoA + H(+) = butanoyl-CoA + CO2. It carries out the reaction (S)-methylmalonyl-CoA + H(+) = propanoyl-CoA + CO2. The enzyme catalyses (2R)-ethylmalonyl-CoA + H(+) = butanoyl-CoA + CO2. In terms of biological role, decarboxylates ethylmalonyl-CoA, a potentially toxic metabolite, to form butyryl-CoA, suggesting it might be involved in metabolite proofreading. Acts preferentially on (S)-ethylmalonyl-CoA but also has some activity on the (R)-isomer. Also has methylmalonyl-CoA decarboxylase activity at lower level. The chain is Ethylmalonyl-CoA decarboxylase (ECHDC1) from Homo sapiens (Human).